The primary structure comprises 394 residues: GPI transamidase component GAB1 (394 aa).

Residues 1 to 135 (MDSTALKVAL…TLLSCISRSS (135 aa)) are Cytoplasmic-facing. A helical transmembrane segment spans residues 136–156 (IIFTNFAISSSLYCILAEGNV). Topologically, residues 157–160 (LLSS) are lumenal. A helical transmembrane segment spans residues 161–181 (VMISISGYLSVYPILLLIPLL). Residues 182–190 (GMLKSWRQR) are Cytoplasmic-facing. The helical transmembrane segment at 191 to 211 (ILSAIVSILSLLILLLFSYSI) threads the bilayer. The Lumenal portion of the chain corresponds to 212–224 (LGSQSWSFLTQVY). A helical membrane pass occupies residues 225–245 (GSIITFEKVFPNLGLWWYFFI). The segment at 235-255 (PNLGLWWYFFIEMFDTFIPFF) is may be involved in recognition of long-chain fatty acids in GPI. Residues 246–250 (EMFDT) are Cytoplasmic-facing. The chain crosses the membrane as a helical span at residues 251 to 271 (FIPFFKAVFNIFIAVFITPFT). At 272-297 (LRYHKQPFYAFILCIGWIVLTKPYPS) the chain is on the lumenal side. The helical transmembrane segment at 298–318 (LGDAGFFFSFLPFFTPLFGYL) threads the bilayer. Residues 319–324 (RYPIIS) are Cytoplasmic-facing. A helical transmembrane segment spans residues 325 to 345 (ALLFLHAIVLAPIFYHLWVVL). The Lumenal segment spans residues 346 to 351 (GSGNSN). The chain crosses the membrane as a helical span at residues 352–372 (FFYAISLVYALAIASILVDLN). Over 373-394 (WAMLRIEYDNGIPNFKLKVTQI) the chain is Cytoplasmic.

This sequence belongs to the PIGU family. As to quaternary structure, forms a complex with GPI16, GPI17, GPI8 and GAA1.

The protein localises to the endoplasmic reticulum membrane. It functions in the pathway glycolipid biosynthesis; glycosylphosphatidylinositol-anchor biosynthesis. Its function is as follows. Component of the GPI transamidase complex. May be involved in the recognition of either the GPI attachment signal or the lipid portion of GPI. In Saccharomyces cerevisiae (strain ATCC 204508 / S288c) (Baker's yeast), this protein is GPI transamidase component GAB1 (GAB1).